A 335-amino-acid chain; its full sequence is Acetyl-coenzyme A carboxylase carboxyl transferase subunit alpha (335 aa).

The CoA carboxyltransferase C-terminal domain occupies 40–294 (QLETLAARRR…KEAIEKHLNA (255 aa)).

The protein belongs to the AccA family. Acetyl-CoA carboxylase is a heterohexamer composed of biotin carboxyl carrier protein (AccB), biotin carboxylase (AccC) and two subunits each of ACCase subunit alpha (AccA) and ACCase subunit beta (AccD).

It is found in the cytoplasm. The enzyme catalyses N(6)-carboxybiotinyl-L-lysyl-[protein] + acetyl-CoA = N(6)-biotinyl-L-lysyl-[protein] + malonyl-CoA. It functions in the pathway lipid metabolism; malonyl-CoA biosynthesis; malonyl-CoA from acetyl-CoA: step 1/1. Component of the acetyl coenzyme A carboxylase (ACC) complex. First, biotin carboxylase catalyzes the carboxylation of biotin on its carrier protein (BCCP) and then the CO(2) group is transferred by the carboxyltransferase to acetyl-CoA to form malonyl-CoA. This Prochlorococcus marinus (strain MIT 9215) protein is Acetyl-coenzyme A carboxylase carboxyl transferase subunit alpha.